A 194-amino-acid polypeptide reads, in one-letter code: Thymidine kinase (194 aa).

Residues 15 to 22 (GSMFSGKS) and 88 to 91 (DEVQ) contribute to the ATP site. E89 serves as the catalytic Proton acceptor. Residues C145, C148, C183, and H186 each coordinate Zn(2+).

The protein belongs to the thymidine kinase family. As to quaternary structure, homotetramer.

The protein localises to the cytoplasm. It carries out the reaction thymidine + ATP = dTMP + ADP + H(+). The chain is Thymidine kinase from Bacillus licheniformis (strain ATCC 14580 / DSM 13 / JCM 2505 / CCUG 7422 / NBRC 12200 / NCIMB 9375 / NCTC 10341 / NRRL NRS-1264 / Gibson 46).